The sequence spans 791 residues: RAS guanyl-releasing protein 1 (791 aa).

The N-terminal Ras-GEF domain maps to 49 to 172 (LGKLSKGASL…RLIDTAQINS (124 aa)). Positions 53–106 (SKGASLDELIQMCIQAFDLDGNMGQNNELLQIMLTMHGFLIPSTELLIKLRTLY) are ras exchanger motif region; required for transforming activity. Positions 201–432 (EPQELAEHLT…YELSYAREPR (232 aa)) constitute a Ras-GEF domain. EF-hand domains are found at residues 466–501 (HVQRMVDSVFKNYDLDQDGYISQEEFEKIAASFPFS) and 502–528 (FCVMDKDREGLISRQEITAYFMRASSI). Ca(2+) is bound by residues Asp479, Asp481, Asp483, Tyr485, Glu490, Asp506, Asp508, Glu510, and Glu517. The Phorbol-ester/DAG-type zinc finger occupies 537-587 (LHNFQETTYLRPTFCDNCAGFLWGVIKQGYRCKDCGMNCHKQCKELVVFEC). The tract at residues 671-715 (TQTENETQSLCLQVPSPPRSRTPDLTSHLPISPMPSPCPSPVPTR) is disordered. A compositionally biased stretch (polar residues) spans 672–681 (QTENETQSLC). Residues 702–712 (SPMPSPCPSPV) are compositionally biased toward pro residues. Residues 728–783 (IRKARAELRGGKAGIQELEKEKVFLKEENTALKIQLKDAHRRVETLRAELRKYVLD) adopt a coiled-coil conformation.

The protein belongs to the RASGRP family.

It localises to the cytoplasm. It is found in the cytosol. The protein localises to the cell membrane. The protein resides in the golgi apparatus membrane. Its subcellular location is the endoplasmic reticulum membrane. Regulated by F-actin polymerization and probably by calcium. Its function is as follows. Functions as a diacylglycerol (DAG)-regulated nucleotide exchange factor specifically activating Ras through the exchange of bound GDP for GTP. The protein is RAS guanyl-releasing protein 1 (rasgrp1) of Xenopus laevis (African clawed frog).